The primary structure comprises 137 residues: Interferon-induced transmembrane protein 3 (137 aa).

Topologically, residues 1-57 (MNHTSQAFVNAATGGQPPNYERIKEEYEVSELGAPHGSASVRTTVINMPREVSVPDH) are cytoplasmic. Tyr-20 bears the Phosphotyrosine mark. A Glycyl lysine isopeptide (Lys-Gly) (interchain with G-Cter in ubiquitin) cross-link involves residue Lys-24. Tyr-27 carries the phosphotyrosine modification. Positions 58–78 (VVWSLFNTLFMNFCCLGFIAY) form an intramembrane region, helical. The interaction with SPP1 stretch occupies residues 60–93 (WSLFNTLFMNFCCLGFIAYAYSVKSRDRKMVGDM). Residues Cys-71 and Cys-72 are each lipidated (S-palmitoyl cysteine). Over 79–109 (AYSVKSRDRKMVGDMTGAQAYASTAKCLNIS) the chain is Cytoplasmic. Glycyl lysine isopeptide (Lys-Gly) (interchain with G-Cter in ubiquitin) cross-links involve residues Lys-83, Lys-88, and Lys-104. A lipid anchor (S-palmitoyl cysteine) is attached at Cys-105. Positions 108-133 (ISSLVLSILMVIITIVTVVIIALNAP) are interaction with VAPA. The helical transmembrane segment at 110 to 130 (SLVLSILMVIITIVTVVIIAL) threads the bilayer. Over 131–137 (NAPRLQT) the chain is Extracellular.

This sequence belongs to the CD225/Dispanin family. In terms of assembly, interacts with ATP6V0B. Interacts with CD81. Interacts with SPP1; the interaction reduces OPN expression. Interacts with BRI3. Polyubiquitinated with both 'Lys-48' and 'Lys-63' linkages. Ubiquitination negatively regulates antiviral activity. Lys-24 is the most prevalent ubiquitination site. Post-translationally, phosphorylation at Tyr-20 is required for endosomal and lysosomal location.

The protein localises to the cell membrane. It localises to the late endosome membrane. Its subcellular location is the early endosome membrane. It is found in the lysosome membrane. The protein resides in the cytoplasm. The protein localises to the perinuclear region. In terms of biological role, IFN-induced antiviral protein which disrupts intracellular cholesterol homeostasis. Inhibits the entry of viruses to the host cell cytoplasm by preventing viral fusion with cholesterol depleted endosomes. May inactivate new enveloped viruses which buds out of the infected cell, by letting them go out with a cholesterol depleted membrane. Active against multiple viruses. Plays a critical role in the structural stability and function of vacuolar ATPase (v-ATPase). Establishes physical contact with the v-ATPase of endosomes which is critical for proper clathrin localization and is also required for the function of the v-ATPase to lower the pH in phagocytic endosomes thus establishing an antiviral state. The polypeptide is Interferon-induced transmembrane protein 3 (Rattus norvegicus (Rat)).